The following is a 472-amino-acid chain: MALHLRSSFSSKSTLLNILRHNLGFGSRSHVTRHIRQILPHDPPLRGSQNPISRLCNTMAEPETLSSFVQHEYANNHQVMDFPGGKVAFTPEIQFISESDKERVPCYRVLDDNGQLITNSQFVQVSEEVAVKIYSDMVTLQIMDNIFYEAQRQGRLSFYATAIGEEAINIASAAALTPQDVIFPQYREPGVLLWRGFTLQEFANQCFGNKSDYGKGRQMPVHYGSNKLNYFTVSATIATQLPNAVGAAYSLKMDKKDACAVTYFGDGGTSEGDFHAALNIAAVMEAPVLFICRNNGWAISTPTSDQFRSDGVVVKGRAYGIRSIRVDGNDALAMYSAVHTAREMAIREQRPILIEALTYRVGHHSTSDDSTRYRSAGEIEWWNKARNPLSRFRTWIESNGWWSDKTESDLRSRIKKEMLEALRVAEKTEKPNLQNMFSDVYDVPPSNLREQELLVRQTINSHPQDYPSDVPL.

185–187 (QYR) contacts thiamine diphosphate. Positions 234, 239, and 240 each coordinate K(+).

Belongs to the BCKDHA family. As to quaternary structure, heterotetramer of alpha and beta chains. It depends on thiamine diphosphate as a cofactor.

It is found in the mitochondrion matrix. The catalysed reaction is N(6)-[(R)-lipoyl]-L-lysyl-[protein] + 3-methyl-2-oxobutanoate + H(+) = N(6)-[(R)-S(8)-2-methylpropanoyldihydrolipoyl]-L-lysyl-[protein] + CO2. In terms of biological role, the branched-chain alpha-keto dehydrogenase complex catalyzes the overall conversion of alpha-keto acids to acyl-CoA and CO(2). It contains multiple copies of three enzymatic components: branched-chain alpha-keto acid decarboxylase (E1), lipoamide acyltransferase (E2) and lipoamide dehydrogenase (E3). In Arabidopsis thaliana (Mouse-ear cress), this protein is 2-oxoisovalerate dehydrogenase subunit alpha 2, mitochondrial.